Here is a 240-residue protein sequence, read N- to C-terminus: uncharacterized protein (240 aa).

The protein to H.influenzae HI_0575.

This is an uncharacterized protein from Escherichia coli (strain K12).